We begin with the raw amino-acid sequence, 310 residues long: Lipoyl synthase (310 aa).

Cys-41, Cys-46, Cys-52, Cys-68, Cys-72, Cys-75, and Ser-281 together coordinate [4Fe-4S] cluster. The Radical SAM core domain maps to 54-270 (GERRTATFMI…RKVAMEKGFK (217 aa)). The tract at residues 285–310 (DEQVNEAAKERQRIGDEKLEAAKNEA) is disordered.

Belongs to the radical SAM superfamily. Lipoyl synthase family. [4Fe-4S] cluster is required as a cofactor.

Its subcellular location is the cytoplasm. The catalysed reaction is [[Fe-S] cluster scaffold protein carrying a second [4Fe-4S](2+) cluster] + N(6)-octanoyl-L-lysyl-[protein] + 2 oxidized [2Fe-2S]-[ferredoxin] + 2 S-adenosyl-L-methionine + 4 H(+) = [[Fe-S] cluster scaffold protein] + N(6)-[(R)-dihydrolipoyl]-L-lysyl-[protein] + 4 Fe(3+) + 2 hydrogen sulfide + 2 5'-deoxyadenosine + 2 L-methionine + 2 reduced [2Fe-2S]-[ferredoxin]. It participates in protein modification; protein lipoylation via endogenous pathway; protein N(6)-(lipoyl)lysine from octanoyl-[acyl-carrier-protein]. Catalyzes the radical-mediated insertion of two sulfur atoms into the C-6 and C-8 positions of the octanoyl moiety bound to the lipoyl domains of lipoate-dependent enzymes, thereby converting the octanoylated domains into lipoylated derivatives. In Staphylococcus carnosus (strain TM300), this protein is Lipoyl synthase.